Reading from the N-terminus, the 335-residue chain is MAVDITLLFRASVKTVKTRNKALGVAVGGGVDGSRDELFRRSPRPKGDFSSRAREVISHIGKLRDFLLEHRKDYINAYSHTMSEYGRMTDTERDQIDQDAQIFMRTCSEAIQQLRTEAHKEIHSQQVKEHRTAVLDFIEDYLKRVCKLYSEQRAIRVKRVVDKKRLSKLEPEPNTKTRESTSSEKVSQSPSKDSEENPATEERPEKILAETQPELGTWGDGKGEDELSPEEIQMFEQENQRLIGEMNSLFDEVRQIEGRVVEISRLQEIFTEKVLQQEAEIDSIHQLVVGATENIKEGNEDIREAIKNNAGFRVWILFFLVMCSFSLLFLDWYDS.

At 1–309 the chain is on the cytoplasmic side; sequence MAVDITLLFR…EDIREAIKNN (309 aa). Composition is skewed to basic and acidic residues over residues 168 to 182 and 192 to 208; these read KLEPEPNTKTRESTS and KDSEENPATEERPEKIL. The tract at residues 168 to 226 is disordered; that stretch reads KLEPEPNTKTRESTSSEKVSQSPSKDSEENPATEERPEKILAETQPELGTWGDGKGEDE. The 63-residue stretch at 243-305 folds into the t-SNARE coiled-coil homology domain; it reads IGEMNSLFDE…KEGNEDIREA (63 aa). A helical; Anchor for type IV membrane protein membrane pass occupies residues 310-330; it reads AGFRVWILFFLVMCSFSLLFL. Topologically, residues 331–335 are vesicular; the sequence is DWYDS.

The protein belongs to the syntaxin family. Component of a SNARE complex consisting of STX18, USE1L, BNIP1/SEC20L, and SEC22B. RINT1/TIP20L and ZW10 are associated with the complex through interaction with BNIP1/SEC20L. Interacts directly with USE1L and BNIP1/SEC20L. Ubiquitous.

It is found in the endoplasmic reticulum membrane. It localises to the golgi apparatus membrane. Functionally, syntaxin that may be involved in targeting and fusion of Golgi-derived retrograde transport vesicles with the ER. In Homo sapiens (Human), this protein is Syntaxin-18 (STX18).